The primary structure comprises 489 residues: Betaine aldehyde dehydrogenase (489 aa).

K(+)-binding residues include Thr26 and Asp93. Gly150–Trp152 is a binding site for NAD(+). Lys162 functions as the Charge relay system in the catalytic mechanism. Residue Lys176 to Glu179 participates in NAD(+) binding. Position 180 (Val180) interacts with K(+). Gly229 to Thr232 serves as a coordination point for NAD(+). Leu245 serves as a coordination point for K(+). Residue Glu251 is the Proton acceptor of the active site. Residues Gly253, Cys285, and Glu386 each contribute to the NAD(+) site. The active-site Nucleophile is the Cys285. Cys285 is modified (cysteine sulfenic acid (-SOH)). Positions 456 and 459 each coordinate K(+). Glu463 functions as the Charge relay system in the catalytic mechanism.

The protein belongs to the aldehyde dehydrogenase family. In terms of assembly, dimer of dimers. K(+) serves as cofactor.

The catalysed reaction is betaine aldehyde + NAD(+) + H2O = glycine betaine + NADH + 2 H(+). The protein operates within amine and polyamine biosynthesis; betaine biosynthesis via choline pathway; betaine from betaine aldehyde: step 1/1. Its function is as follows. Involved in the biosynthesis of the osmoprotectant glycine betaine. Catalyzes the irreversible oxidation of betaine aldehyde to the corresponding acid. The polypeptide is Betaine aldehyde dehydrogenase (Burkholderia pseudomallei (strain K96243)).